Reading from the N-terminus, the 440-residue chain is Xylose isomerase (440 aa).

Residues H101 and D104 contribute to the active site. Mg(2+) is bound by residues E232, E268, H271, D296, D307, D309, and D339.

The protein belongs to the xylose isomerase family. In terms of assembly, homotetramer. Mg(2+) serves as cofactor.

The protein localises to the cytoplasm. The catalysed reaction is alpha-D-xylose = alpha-D-xylulofuranose. In Escherichia fergusonii (strain ATCC 35469 / DSM 13698 / CCUG 18766 / IAM 14443 / JCM 21226 / LMG 7866 / NBRC 102419 / NCTC 12128 / CDC 0568-73), this protein is Xylose isomerase.